A 329-amino-acid chain; its full sequence is Urease accessory protein UreD 2 (329 aa).

The segment at 100-120 is disordered; that stretch reads YSRPSDSSKFTNGTQSANSNT. Over residues 103–120 the composition is skewed to polar residues; sequence PSDSSKFTNGTQSANSNT.

Belongs to the UreD family. UreD, UreF and UreG form a complex that acts as a GTP-hydrolysis-dependent molecular chaperone, activating the urease apoprotein by helping to assemble the nickel containing metallocenter of UreC. The UreE protein probably delivers the nickel.

The protein localises to the cytoplasm. Its function is as follows. Required for maturation of urease via the functional incorporation of the urease nickel metallocenter. This Psychrobacter cryohalolentis (strain ATCC BAA-1226 / DSM 17306 / VKM B-2378 / K5) protein is Urease accessory protein UreD 2.